The chain runs to 160 residues: Cyanate hydratase (160 aa).

Residues arginine 100, glutamate 103, and serine 126 contribute to the active site.

It belongs to the cyanase family.

It carries out the reaction cyanate + hydrogencarbonate + 3 H(+) = NH4(+) + 2 CO2. Its function is as follows. Catalyzes the reaction of cyanate with bicarbonate to produce ammonia and carbon dioxide. This is Cyanate hydratase from Aspergillus oryzae (strain ATCC 42149 / RIB 40) (Yellow koji mold).